The primary structure comprises 667 residues: tRNA 5-methylaminomethyl-2-thiouridine biosynthesis bifunctional protein MnmC (667 aa).

Residues 1–241 (MHKLTFAQLS…KREMLCGEKA (241 aa)) are tRNA (mnm(5)s(2)U34)-methyltransferase. Residues 268 to 667 (VGGGIASLFV…RKWLKGSKVV (400 aa)) are FAD-dependent cmnm(5)s(2)U34 oxidoreductase.

In the N-terminal section; belongs to the methyltransferase superfamily. tRNA (mnm(5)s(2)U34)-methyltransferase family. It in the C-terminal section; belongs to the DAO family. FAD serves as cofactor.

The protein resides in the cytoplasm. The catalysed reaction is 5-aminomethyl-2-thiouridine(34) in tRNA + S-adenosyl-L-methionine = 5-methylaminomethyl-2-thiouridine(34) in tRNA + S-adenosyl-L-homocysteine + H(+). In terms of biological role, catalyzes the last two steps in the biosynthesis of 5-methylaminomethyl-2-thiouridine (mnm(5)s(2)U) at the wobble position (U34) in tRNA. Catalyzes the FAD-dependent demodification of cmnm(5)s(2)U34 to nm(5)s(2)U34, followed by the transfer of a methyl group from S-adenosyl-L-methionine to nm(5)s(2)U34, to form mnm(5)s(2)U34. The chain is tRNA 5-methylaminomethyl-2-thiouridine biosynthesis bifunctional protein MnmC from Haemophilus ducreyi (strain 35000HP / ATCC 700724).